The primary structure comprises 195 residues: uncharacterized protein (195 aa).

Residues 175-195 (ILGKISGFFGSIVSTIFSLFG) form a helical membrane-spanning segment.

The protein resides in the membrane. This is an uncharacterized protein from Methanocaldococcus jannaschii (strain ATCC 43067 / DSM 2661 / JAL-1 / JCM 10045 / NBRC 100440) (Methanococcus jannaschii).